The chain runs to 148 residues: Deoxyuridine 5'-triphosphate nucleotidohydrolase (148 aa).

Substrate contacts are provided by residues 67–69 (RSG), N80, 84–86 (LID), and M94.

It belongs to the dUTPase family. The cofactor is Mg(2+).

It catalyses the reaction dUTP + H2O = dUMP + diphosphate + H(+). It participates in pyrimidine metabolism; dUMP biosynthesis; dUMP from dCTP (dUTP route): step 2/2. In terms of biological role, this enzyme is involved in nucleotide metabolism: it produces dUMP, the immediate precursor of thymidine nucleotides and it decreases the intracellular concentration of dUTP so that uracil cannot be incorporated into DNA. The chain is Deoxyuridine 5'-triphosphate nucleotidohydrolase from Paraburkholderia phytofirmans (strain DSM 17436 / LMG 22146 / PsJN) (Burkholderia phytofirmans).